Reading from the N-terminus, the 696-residue chain is Polyribonucleotide nucleotidyltransferase (696 aa).

Mg(2+)-binding residues include D489 and D495. In terms of domain architecture, KH spans 556 to 615 (PQYVTMKINPEKIRDVIGKGGVVIREITEATNCAIDISDDGTIKIAAHTTEEGEAAKRRI). An S1 motif domain is found at 625 to 693 (GKVYEGTVVK…RQGRVRLSMK (69 aa)).

This sequence belongs to the polyribonucleotide nucleotidyltransferase family. In terms of assembly, component of the RNA degradosome, which is a multiprotein complex involved in RNA processing and mRNA degradation. It depends on Mg(2+) as a cofactor.

It localises to the cytoplasm. It catalyses the reaction RNA(n+1) + phosphate = RNA(n) + a ribonucleoside 5'-diphosphate. Involved in mRNA degradation. Catalyzes the phosphorolysis of single-stranded polyribonucleotides processively in the 3'- to 5'-direction. This chain is Polyribonucleotide nucleotidyltransferase, found in Coxiella burnetii (strain RSA 331 / Henzerling II).